The primary structure comprises 693 residues: Elongation factor G (693 aa).

One can recognise a tr-type G domain in the interval 8 to 282 (AKTRNIGIMA…AVIDYLPSPL (275 aa)). GTP-binding positions include 17-24 (AHVDAGKT), 81-85 (DTPGH), and 135-138 (NKMD).

The protein belongs to the TRAFAC class translation factor GTPase superfamily. Classic translation factor GTPase family. EF-G/EF-2 subfamily.

The protein resides in the cytoplasm. Its function is as follows. Catalyzes the GTP-dependent ribosomal translocation step during translation elongation. During this step, the ribosome changes from the pre-translocational (PRE) to the post-translocational (POST) state as the newly formed A-site-bound peptidyl-tRNA and P-site-bound deacylated tRNA move to the P and E sites, respectively. Catalyzes the coordinated movement of the two tRNA molecules, the mRNA and conformational changes in the ribosome. The polypeptide is Elongation factor G (Streptococcus thermophilus (strain CNRZ 1066)).